The sequence spans 366 residues: Histidinol-phosphate aminotransferase 2 (366 aa).

The span at 1–11 (MQVKDQLSSLQ) shows a compositional bias: polar residues. A disordered region spans residues 1 to 21 (MQVKDQLSSLQPYKPGKSPEQ). K222 bears the N6-(pyridoxal phosphate)lysine mark.

Belongs to the class-II pyridoxal-phosphate-dependent aminotransferase family. Histidinol-phosphate aminotransferase subfamily. In terms of assembly, homodimer. The cofactor is pyridoxal 5'-phosphate.

The catalysed reaction is L-histidinol phosphate + 2-oxoglutarate = 3-(imidazol-4-yl)-2-oxopropyl phosphate + L-glutamate. Its pathway is amino-acid biosynthesis; L-histidine biosynthesis; L-histidine from 5-phospho-alpha-D-ribose 1-diphosphate: step 7/9. The sequence is that of Histidinol-phosphate aminotransferase 2 (hisC2) from Bacillus anthracis.